The sequence spans 226 residues: MADKRKYVIPGDVVTTGPFRPEQNTVLEGNKIISTTIGISEIYDDSVRVIPLTGKYIPKINDLVIGKVNSHTSLSWELDINSCYVGFLPAQDVFGRDFSAHADELATKLRTGDLVAARIANFDRTRDPLVSISDRDLGKIDSGVLMEISPSKVPRLIGKKGSMIQMIEEATDAAVTIGQNGWVVVSCESPEGLLKAKKAIQMVNEQAHVANLTDQVKEMLDKKGES.

Residues asparagine 61–arginine 135 form the S1 motif domain. The KH domain maps to aspartate 141–isoleucine 200.

It belongs to the RRP4 family. Component of the archaeal exosome complex. Forms a trimer of Rrp4 and/or Csl4 subunits. The trimer associates with a hexameric ring-like arrangement composed of 3 Rrp41-Rrp42 heterodimers.

The protein resides in the cytoplasm. In terms of biological role, non-catalytic component of the exosome, which is a complex involved in RNA degradation. Increases the RNA binding and the efficiency of RNA degradation. Confers strong poly(A) specificity to the exosome. The chain is Exosome complex component Rrp4 from Nitrosopumilus maritimus (strain SCM1).